We begin with the raw amino-acid sequence, 194 residues long: Peptide deformylase (194 aa).

Residues 71–93 are disordered; sequence DAEPEECGHDHGDGEGAHKHYPV. Basic and acidic residues predominate over residues 76 to 93; it reads ECGHDHGDGEGAHKHYPV. The Fe cation site is built by C119 and H161. Residue E162 is part of the active site. Fe cation is bound at residue H165.

This sequence belongs to the polypeptide deformylase family. It depends on Fe(2+) as a cofactor.

It catalyses the reaction N-terminal N-formyl-L-methionyl-[peptide] + H2O = N-terminal L-methionyl-[peptide] + formate. In terms of biological role, removes the formyl group from the N-terminal Met of newly synthesized proteins. Requires at least a dipeptide for an efficient rate of reaction. N-terminal L-methionine is a prerequisite for activity but the enzyme has broad specificity at other positions. This chain is Peptide deformylase, found in Erythrobacter litoralis (strain HTCC2594).